The primary structure comprises 501 residues: O-phosphoseryl-tRNA(Sec) selenium transferase (501 aa).

The segment at 1-44 (MNRESFAAGERLVSPAYVRQGCEARRSHEHLIRLLLEKGKCPEN) is tetramerization. Phosphoserine is present on serine 14. A pyridoxal 5'-phosphate-binding site is contributed by arginine 75. Residues 96-106 (GRSGDISAVQP) are phosphate loop (P-loop). Substrate-binding residues include arginine 97, serine 98, and glutamine 105. Arginine 271 is a binding site for tRNA. Lysine 284 carries the post-translational modification N6-(pyridoxal phosphate)lysine. Arginine 313 serves as a coordination point for substrate. TRNA is bound by residues arginine 398 and lysine 463.

It belongs to the SepSecS family. As to quaternary structure, homotetramer formed by a catalytic dimer and a non-catalytic dimer serving as a binding platform that orients tRNASec for catalysis. Each tetramer binds the CCA ends of two tRNAs which point to the active sites of the catalytic dimer. Pyridoxal 5'-phosphate is required as a cofactor.

It is found in the cytoplasm. It catalyses the reaction O-phospho-L-seryl-tRNA(Sec) + selenophosphate + H2O = L-selenocysteinyl-tRNA(Sec) + 2 phosphate. Its pathway is aminoacyl-tRNA biosynthesis; selenocysteinyl-tRNA(Sec) biosynthesis; selenocysteinyl-tRNA(Sec) from L-seryl-tRNA(Sec) (archaeal/eukaryal route): step 2/2. Its function is as follows. Converts O-phosphoseryl-tRNA(Sec) to selenocysteinyl-tRNA(Sec) required for selenoprotein biosynthesis. This is O-phosphoseryl-tRNA(Sec) selenium transferase (SEPSECS) from Pongo abelii (Sumatran orangutan).